The chain runs to 244 residues: Orotidine 5'-phosphate decarboxylase (244 aa).

Residues D12, K34, 61-70 (DLKLFDIPNT), T125, R187, Q196, G216, and R217 contribute to the substrate site. Residue K63 is the Proton donor of the active site.

This sequence belongs to the OMP decarboxylase family. Type 1 subfamily. As to quaternary structure, homodimer.

The catalysed reaction is orotidine 5'-phosphate + H(+) = UMP + CO2. It participates in pyrimidine metabolism; UMP biosynthesis via de novo pathway; UMP from orotate: step 2/2. Catalyzes the decarboxylation of orotidine 5'-monophosphate (OMP) to uridine 5'-monophosphate (UMP). The polypeptide is Orotidine 5'-phosphate decarboxylase (Dictyoglomus turgidum (strain DSM 6724 / Z-1310)).